Consider the following 175-residue polypeptide: Shikimate kinase (175 aa).

Residue 11–16 coordinates ATP; the sequence is GAGKTT. Residue Thr15 participates in Mg(2+) binding. Residues Asp33, Arg57, and Gly79 each coordinate substrate. Arg118 contributes to the ATP binding site. Position 140 (Arg140) interacts with substrate.

This sequence belongs to the shikimate kinase family. Monomer. Requires Mg(2+) as cofactor.

It localises to the cytoplasm. It catalyses the reaction shikimate + ATP = 3-phosphoshikimate + ADP + H(+). Its pathway is metabolic intermediate biosynthesis; chorismate biosynthesis; chorismate from D-erythrose 4-phosphate and phosphoenolpyruvate: step 5/7. Functionally, catalyzes the specific phosphorylation of the 3-hydroxyl group of shikimic acid using ATP as a cosubstrate. This Bacteroides thetaiotaomicron (strain ATCC 29148 / DSM 2079 / JCM 5827 / CCUG 10774 / NCTC 10582 / VPI-5482 / E50) protein is Shikimate kinase.